We begin with the raw amino-acid sequence, 213 residues long: StAR-related lipid transfer protein 5 (213 aa).

The region spanning 1 to 213 (MDPALAAQMS…LQKAVKQFHE (213 aa)) is the START domain.

Functionally, may be involved in the intracellular transport of sterols or other lipids. May bind cholesterol or other sterols. The protein is StAR-related lipid transfer protein 5 (STARD5) of Pongo abelii (Sumatran orangutan).